The chain runs to 453 residues: Carbamoyl phosphate synthase arginine-specific small chain (453 aa).

The N-terminal 13 residues, 1–13 (MFSKLAANFAQRA), are a transit peptide targeting the mitochondrion. A Glutamine amidotransferase type-1 domain is found at 233–420 (HVALIDCGVK…LENVRAAKSA (188 aa)). Catalysis depends on Cys-309, which acts as the Nucleophile. Catalysis depends on residues His-393 and Glu-395.

Belongs to the CarA family. Heterodimer composed of 2 chains; the small (or glutamine) chain promotes the hydrolysis of glutamine to ammonia, which is used by the large (or ammonia) chain to synthesize carbamoyl phosphate.

Its subcellular location is the mitochondrion matrix. It catalyses the reaction hydrogencarbonate + L-glutamine + 2 ATP + H2O = carbamoyl phosphate + L-glutamate + 2 ADP + phosphate + 2 H(+). It carries out the reaction L-glutamine + H2O = L-glutamate + NH4(+). It participates in amino-acid biosynthesis; L-arginine biosynthesis; carbamoyl phosphate from bicarbonate: step 1/1. In terms of biological role, small subunit of the arginine-specific carbamoyl phosphate synthase (CPSase). CPSase catalyzes the formation of carbamoyl phosphate from the ammonia moiety of glutamine, carbonate, and phosphate donated by ATP, the first step of the arginine biosynthetic pathway. The small subunit (glutamine amidotransferase) binds and cleaves glutamine to supply the large subunit with the substrate ammonia. This Hypocrea virens (Gliocladium virens) protein is Carbamoyl phosphate synthase arginine-specific small chain (cpa1).